Here is a 290-residue protein sequence, read N- to C-terminus: 2-phosphoglycerate kinase (290 aa).

The ATP-cone domain maps to 1–89 (MIIVTDSERK…FWRELRRRKV (89 aa)).

This sequence belongs to the 2-phosphoglycerate kinase family. A divalent metal cation serves as cofactor.

The enzyme catalyses (2R)-2-phosphoglycerate + ATP = (2R)-2,3-bisphosphoglycerate + ADP + H(+). The protein operates within thermoadapter biosynthesis; cyclic 2,3-diphosphoglycerate biosynthesis; cyclic 2,3-diphosphoglycerate from 2-phospho-D-glycerate: step 1/2. Its function is as follows. Catalyzes the phosphorylation of 2-phosphoglycerate to 2,3-diphosphoglycerate. Involved in the biosynthesis of cyclic 2,3-bisphosphoglycerate, a thermoprotectant. In Thermococcus kodakarensis (strain ATCC BAA-918 / JCM 12380 / KOD1) (Pyrococcus kodakaraensis (strain KOD1)), this protein is 2-phosphoglycerate kinase.